A 326-amino-acid chain; its full sequence is RNA-binding motif protein, X-linked 2 (326 aa).

A Glycyl lysine isopeptide (Lys-Gly) (interchain with G-Cter in SUMO2) cross-link involves residue lysine 8. Positions 36 to 114 constitute an RRM domain; that stretch reads AWIFVGGLPY…RTIRVDHVSN (79 aa). The disordered stretch occupies residues 117 to 326; the sequence is APQESEDVDD…SYHGSDRRHH (210 aa). Threonine 140 is subject to Phosphothreonine. Residue serine 149 is modified to Phosphoserine. The span at 157–172 shows a compositional bias: basic residues; sequence TKKHKKDKKEKKKRKK. Residues 177 to 190 are compositionally biased toward polar residues; that stretch reads GQAQAEQPSCSRSA. 4 stretches are compositionally biased toward basic and acidic residues: residues 191-200, 207-219, 236-245, and 255-273; these read TVKEKKDERA, KTSE…EHRE, ARAEDPECKA, and KSAS…ERGR. Serine 274 bears the Phosphoserine mark. Residues 291–312 are compositionally biased toward basic residues; sequence HRSRSRSRSPDKSHRHKKYRHS. Over residues 313 to 326 the composition is skewed to basic and acidic residues; it reads RERDSYHGSDRRHH.

The protein belongs to the IST3 family. As to quaternary structure, part of the activated spliceosome B/catalytic step 1 spliceosome, one of the forms of the spliceosome which has a well-formed active site but still cannot catalyze the branching reaction and is composed of at least 52 proteins, the U2, U5 and U6 snRNAs and the pre-mRNA. Component of the minor spliceosome, which splices U12-type introns.

Its subcellular location is the nucleus. Its function is as follows. Involved in pre-mRNA splicing as component of the activated spliceosome. As a component of the minor spliceosome, involved in the splicing of U12-type introns in pre-mRNAs. This is RNA-binding motif protein, X-linked 2 (Rbmx2) from Mus musculus (Mouse).